Consider the following 283-residue polypeptide: Pantothenate synthetase (283 aa).

An ATP-binding site is contributed by 34 to 41 (MGALHDGH). The active-site Proton donor is H41. (R)-pantoate is bound at residue Q65. Q65 is a beta-alanine binding site. 152–155 (GEKD) is a binding site for ATP. Q158 lines the (R)-pantoate pocket. ATP contacts are provided by residues V181 and 189–192 (MSSR).

Belongs to the pantothenate synthetase family. Homodimer.

The protein localises to the cytoplasm. It carries out the reaction (R)-pantoate + beta-alanine + ATP = (R)-pantothenate + AMP + diphosphate + H(+). The protein operates within cofactor biosynthesis; (R)-pantothenate biosynthesis; (R)-pantothenate from (R)-pantoate and beta-alanine: step 1/1. Its function is as follows. Catalyzes the condensation of pantoate with beta-alanine in an ATP-dependent reaction via a pantoyl-adenylate intermediate. The protein is Pantothenate synthetase of Bradyrhizobium sp. (strain BTAi1 / ATCC BAA-1182).